A 353-amino-acid chain; its full sequence is JmjC domain-containing protein E (353 aa).

Positions 138–348 constitute a JmjC domain; it reads YYIQYQNNSL…ETTKYQKQIK (211 aa).

This Dictyostelium discoideum (Social amoeba) protein is JmjC domain-containing protein E (jcdE).